The chain runs to 449 residues: Xaa-Pro dipeptidase (449 aa).

Residues Asp-246, Asp-257, His-345, Glu-390, and Glu-429 each coordinate Mn(2+).

Belongs to the peptidase M24B family. Bacterial-type prolidase subfamily. Mn(2+) serves as cofactor.

It carries out the reaction Xaa-L-Pro dipeptide + H2O = an L-alpha-amino acid + L-proline. Its function is as follows. Splits dipeptides with a prolyl residue in the C-terminal position. This is Xaa-Pro dipeptidase from Yersinia enterocolitica serotype O:8 / biotype 1B (strain NCTC 13174 / 8081).